Consider the following 120-residue polypeptide: Large ribosomal subunit protein eL18 (120 aa).

It belongs to the eukaryotic ribosomal protein eL18 family.

The protein is Large ribosomal subunit protein eL18 of Thermoplasma acidophilum (strain ATCC 25905 / DSM 1728 / JCM 9062 / NBRC 15155 / AMRC-C165).